Consider the following 292-residue polypeptide: Aquaporin-3 (292 aa).

At Met1 to Gln24 the chain is on the cytoplasmic side. The helical transmembrane segment at Ala25 to Ser42 threads the bilayer. The Extracellular portion of the chain corresponds to Val43–Phe56. A helical membrane pass occupies residues Leu57–Ala74. Topologically, residues Gly75 to Ser78 are cytoplasmic. Residues Gly79–Phe92 constitute an intramembrane region (discontinuously helical). Positions Asn83–Ala85 match the NPA 1 motif. Residues Leu93–Lys100 are Cytoplasmic-facing. Residues Leu101–Gly121 form a helical membrane-spanning segment. The Extracellular segment spans residues Leu122–Asn159. N-linked (GlcNAc...) asparagine glycosylation is present at Asn141. Residues Gly160–Ala177 traverse the membrane as a helical segment. Over Ile178–Gly189 the chain is Cytoplasmic. A helical transmembrane segment spans residues Leu190–Met206. Over Gly207–Ser210 the chain is Extracellular. An intramembrane region (discontinuously helical) is located at residues Gly211–Leu224. An NPA 2 motif is present at residues Asn215–Ala217. Residues Phe225–Trp242 are Extracellular-facing. The chain crosses the membrane as a helical span at residues Trp243 to Met264. Over Ile265–Ile292 the chain is Cytoplasmic.

This sequence belongs to the MIP/aquaporin (TC 1.A.8) family. In terms of assembly, homotetramer; each monomer provides an independent glycerol/water pore. Could also exist in other oligomeric states. As to expression, detected in principal cells in collecting ducts in kidney medulla (at protein level). Renal medulla and colon. Predominantly in the inner medulla. Expressed in basal layer of epidermal keratinocytes.

It is found in the cell membrane. It localises to the basolateral cell membrane. The catalysed reaction is glycerol(in) = glycerol(out). It catalyses the reaction H2O(in) = H2O(out). The enzyme catalyses urea(in) = urea(out). It carries out the reaction H2O2(out) = H2O2(in). Aquaglyceroporins form homotetrameric transmembrane channels, with each monomer independently mediating glycerol and water transport across the plasma membrane along their osmotic gradient. Could also be permeable to urea. Also participates in cell permeability to H2O2 and H2O2-mediated signaling. In skin, transports glycerol to the epidermis and stratum corneum, where it maintains hydration, elasticity, and supports lipid biosynthesis for barrier repair. In kidney, contributes to the reabsorption of water, helping the body maintain proper fluid balance. The protein is Aquaporin-3 of Mus musculus (Mouse).